Reading from the N-terminus, the 311-residue chain is Olfactory receptor 10D1B (311 aa).

Residues 1-24 (MKNLSVVTQFILLGIPHTEGVETM) are Extracellular-facing. Residues 25–45 (LFVLFFSFYIFTLVGNLLILL) form a helical membrane-spanning segment. Topologically, residues 46–54 (AIVSSSRLH) are cytoplasmic. The helical transmembrane segment at 55 to 75 (TPMYFFLCQLSVCDIFFPSVS) threads the bilayer. The Extracellular segment spans residues 76 to 95 (SPKMLFYLSGNTPAISYAGC). An intrachain disulfide couples C95 to C187. The chain crosses the membrane as a helical span at residues 96–116 (VSQLFFYHFLGGTECFLYTVM). Residues 117-137 (AYDRFVAICYPLRYSVIMSHR) are Cytoplasmic-facing. Residues 138–158 (ICAFLAMGTAVFGCIHSTFLT) form a helical membrane-spanning segment. Residues 159–192 (TLTFQLPYCGPKDVNYYFCDIPVVMKLACADTST) lie on the Extracellular side of the membrane. Residues 193–213 (LEMVGFISVGLMPLSCFFFIL) form a helical membrane-spanning segment. Topologically, residues 214 to 237 (TSYSCIVRSILQIRSTEGRHRAFS) are cytoplasmic. A helical transmembrane segment spans residues 238-258 (TCSAHFTAILLFYMPVIFIYL). Residues 259 to 271 (RPTPSPWLDATVQ) lie on the Extracellular side of the membrane. Residues 272-288 (ILNNLVTPMLNPLIYSL) traverse the membrane as a helical segment. Residues 289–311 (RNKEVKSSLWTVLHLLCFLPKHL) are Cytoplasmic-facing.

The protein belongs to the G-protein coupled receptor 1 family.

The protein resides in the cell membrane. Functionally, odorant receptor. The polypeptide is Olfactory receptor 10D1B (Mus musculus (Mouse)).